A 933-amino-acid chain; its full sequence is uncharacterized protein (933 aa).

The span at 1–28 shows a compositional bias: polar residues; the sequence is MNGNLPHIQIQSPKNSLDHLNNGRQATH. Disordered regions lie at residues 1-135, 173-194, and 252-275; these read MNGN…GESD, MDNE…NAAD, and ATDF…ADAQ. The span at 29-47 shows a compositional bias: basic and acidic residues; that stretch reads NFEHGKPGDREEANGHADA. Over residues 49–59 the composition is skewed to low complexity; it reads SSSGRSRYLSS. Composition is skewed to polar residues over residues 87–101 and 108–135; these read TLSF…SNTH and NRSS…GESD. The span at 173-182 shows a compositional bias: acidic residues; that stretch reads MDNESSEEER. The segment covering 264–275 has biased composition (polar residues); the sequence is EPSSSRHTADAQ. WD repeat units follow at residues 314 to 353, 385 to 423, 425 to 465, 467 to 506, 517 to 563, 568 to 607, 617 to 657, and 665 to 710; these read SSNN…HARS, GHTA…CLCC, EHSD…VSFW, ELPE…FRTQ, AKGS…LELK, ANAQ…MHKT, ASVR…SVIS, and PSLR…AARK. The residue at position 722 (serine 722) is a Phosphoserine. The disordered stretch occupies residues 756–796; the sequence is NASQITNNENNGNDDIKKGDEPEEEHVGLRKNSTQEKNANL. Residues 757–768 show a composition bias toward polar residues; it reads ASQITNNENNGN. The span at 769–783 shows a compositional bias: basic and acidic residues; sequence DDIKKGDEPEEEHVG.

Its subcellular location is the endoplasmic reticulum. The protein localises to the nucleus. This is an uncharacterized protein from Schizosaccharomyces pombe (strain 972 / ATCC 24843) (Fission yeast).